Here is a 410-residue protein sequence, read N- to C-terminus: Cysteine desulfurase IscS (410 aa).

Residues 80–81 (AT), Asn160, Gln188, and 208–210 (SGH) each bind pyridoxal 5'-phosphate. The residue at position 211 (Lys211) is an N6-(pyridoxal phosphate)lysine. Position 248 (Thr248) interacts with pyridoxal 5'-phosphate. The Cysteine persulfide intermediate role is filled by Cys334. Residue Cys334 participates in [2Fe-2S] cluster binding.

Belongs to the class-V pyridoxal-phosphate-dependent aminotransferase family. NifS/IscS subfamily. As to quaternary structure, homodimer. Forms a heterotetramer with IscU, interacts with other sulfur acceptors. It depends on pyridoxal 5'-phosphate as a cofactor.

It localises to the cytoplasm. The catalysed reaction is (sulfur carrier)-H + L-cysteine = (sulfur carrier)-SH + L-alanine. Its pathway is cofactor biosynthesis; iron-sulfur cluster biosynthesis. In terms of biological role, master enzyme that delivers sulfur to a number of partners involved in Fe-S cluster assembly, tRNA modification or cofactor biosynthesis. Catalyzes the removal of elemental sulfur atoms from cysteine to produce alanine. Functions as a sulfur delivery protein for Fe-S cluster synthesis onto IscU, an Fe-S scaffold assembly protein, as well as other S acceptor proteins. The sequence is that of Cysteine desulfurase IscS from Rickettsia prowazekii (strain Madrid E).